A 355-amino-acid chain; its full sequence is Probable aldo-keto reductase 3 (355 aa).

Residue Tyr70 is the Proton donor of the active site. His138 contacts substrate. Ser217–Gly227 provides a ligand contact to NADP(+).

The protein belongs to the aldo/keto reductase family.

In Oryza sativa subsp. indica (Rice), this protein is Probable aldo-keto reductase 3.